Consider the following 390-residue polypeptide: Na(+)/H(+) antiporter NhaA 1 (390 aa).

11 consecutive transmembrane segments (helical) span residues serine 14–leucine 34, threonine 59–leucine 79, valine 94–valine 114, glycine 125–glycine 145, leucine 154–phenylalanine 174, leucine 179–tyrosine 199, isoleucine 205–histidine 225, proline 260–serine 280, isoleucine 295–isoleucine 315, tryptophan 328–isoleucine 348, and alanine 362–leucine 382.

Belongs to the NhaA Na(+)/H(+) (TC 2.A.33) antiporter family.

It localises to the cell inner membrane. The enzyme catalyses Na(+)(in) + 2 H(+)(out) = Na(+)(out) + 2 H(+)(in). Na(+)/H(+) antiporter that extrudes sodium in exchange for external protons. The protein is Na(+)/H(+) antiporter NhaA 1 of Campylobacter fetus subsp. fetus (strain 82-40).